We begin with the raw amino-acid sequence, 129 residues long: Small ribosomal subunit protein uS11 (129 aa).

Belongs to the universal ribosomal protein uS11 family. In terms of assembly, part of the 30S ribosomal subunit. Interacts with proteins S7 and S18. Binds to IF-3.

Located on the platform of the 30S subunit, it bridges several disparate RNA helices of the 16S rRNA. Forms part of the Shine-Dalgarno cleft in the 70S ribosome. In Francisella tularensis subsp. mediasiatica (strain FSC147), this protein is Small ribosomal subunit protein uS11.